The chain runs to 101 residues: MAKKSSVEKQKRRERLVQLKWDKRKELREKSYNINLSEEEREQARIALNKMPRDSSPIRLRNRCQMTGRARGFMRKFKLSRLTFRELASMGMIPGVTKSSW.

Belongs to the universal ribosomal protein uS14 family. Part of the 30S ribosomal subunit. Contacts proteins S3 and S10.

Binds 16S rRNA, required for the assembly of 30S particles and may also be responsible for determining the conformation of the 16S rRNA at the A site. This chain is Small ribosomal subunit protein uS14, found in Protochlamydia amoebophila (strain UWE25).